The chain runs to 455 residues: Eukaryotic translation initiation factor 3 subunit E (455 aa).

Residues 256 to 425 enclose the PCI domain; the sequence is TDLFFSPAYI…GTVIMNHPPQ (170 aa).

The protein belongs to the eIF-3 subunit E family. In terms of assembly, component of the eukaryotic translation initiation factor 3 (eIF-3) complex.

The protein localises to the cytoplasm. Its function is as follows. Component of the eukaryotic translation initiation factor 3 (eIF-3) complex, which is involved in protein synthesis of a specialized repertoire of mRNAs and, together with other initiation factors, stimulates binding of mRNA and methionyl-tRNAi to the 40S ribosome. The eIF-3 complex specifically targets and initiates translation of a subset of mRNAs involved in cell proliferation. This Neosartorya fischeri (strain ATCC 1020 / DSM 3700 / CBS 544.65 / FGSC A1164 / JCM 1740 / NRRL 181 / WB 181) (Aspergillus fischerianus) protein is Eukaryotic translation initiation factor 3 subunit E (int6).